Reading from the N-terminus, the 303-residue chain is Probable 5-dehydro-4-deoxyglucarate dehydratase (303 aa).

This sequence belongs to the DapA family.

It catalyses the reaction 5-dehydro-4-deoxy-D-glucarate + H(+) = 2,5-dioxopentanoate + CO2 + H2O. Its pathway is carbohydrate acid metabolism; D-glucarate degradation; 2,5-dioxopentanoate from D-glucarate: step 2/2. This is Probable 5-dehydro-4-deoxyglucarate dehydratase from Pseudomonas savastanoi pv. phaseolicola (strain 1448A / Race 6) (Pseudomonas syringae pv. phaseolicola (strain 1448A / Race 6)).